A 155-amino-acid chain; its full sequence is Effector protein PevD1 (155 aa).

Positions 1–18 (MQFTLAAAAALFGASALA) are cleaved as a signal peptide. An AA1-like domain is found at 33–148 (NMYENIDIAD…NPTTIVIDSL (116 aa)). 2 cysteine pairs are disulfide-bonded: C70-C84 and C125-C135.

As to quaternary structure, monomer. Interacts with Arabidopsis thaliana NRP.

It is found in the secreted. Functionally, effector protein. Elicits a hypersensitive response (HR) in tobacco plants (N.tabacum) and cotton (G.hirsutum). Boosts systemic acquired resistance (SAR) to tobacco mosaic virus (TMV) infection in N.tabacum and to V.dhaliae infection in primed cotton seedlings. This is Effector protein PevD1 from Verticillium dahliae (Verticillium wilt).